A 413-amino-acid polypeptide reads, in one-letter code: Arginine biosynthesis bifunctional protein ArgJ (413 aa).

Substrate-binding residues include T160, K186, T197, E284, N408, and S413. The Nucleophile role is filled by T197.

Belongs to the ArgJ family. As to quaternary structure, heterotetramer of two alpha and two beta chains.

It localises to the cytoplasm. It catalyses the reaction N(2)-acetyl-L-ornithine + L-glutamate = N-acetyl-L-glutamate + L-ornithine. It carries out the reaction L-glutamate + acetyl-CoA = N-acetyl-L-glutamate + CoA + H(+). It participates in amino-acid biosynthesis; L-arginine biosynthesis; L-ornithine and N-acetyl-L-glutamate from L-glutamate and N(2)-acetyl-L-ornithine (cyclic): step 1/1. The protein operates within amino-acid biosynthesis; L-arginine biosynthesis; N(2)-acetyl-L-ornithine from L-glutamate: step 1/4. Functionally, catalyzes two activities which are involved in the cyclic version of arginine biosynthesis: the synthesis of N-acetylglutamate from glutamate and acetyl-CoA as the acetyl donor, and of ornithine by transacetylation between N(2)-acetylornithine and glutamate. In Burkholderia mallei (strain ATCC 23344), this protein is Arginine biosynthesis bifunctional protein ArgJ.